The primary structure comprises 1183 residues: M-phase phosphoprotein 9 (1183 aa).

3 disordered regions span residues 28–52, 300–334, and 472–495; these read GLNL…SGKT, KLKQ…EKSD, and ISFS…SFSQ. The span at 324-334 shows a compositional bias: basic and acidic residues; the sequence is QSKKTPIEKSD. The segment at 401 to 800 is required for its centrosomal localization; it reads TSNEMKLPSL…EAQVKQVEHE (400 aa). Residues 451–500 are interaction with CEP97; it reads KPKQQISGIQPHGLPNALDDRISFSPDSVLEPSMSSPSDIDSFSQASNVT. Positions 483–495 are enriched in low complexity; the sequence is SMSSPSDIDSFSQ. Positions 609–804 form a coiled coil; it reads DLRAYYESEI…KQVEHENMLS (196 aa). Residue S781 is modified to Phosphoserine; by TTBK2. Residue K784 forms a Glycyl lysine isopeptide (Lys-Gly) (interchain with G-Cter in ubiquitin) linkage. S788 is subject to Phosphoserine; by TTBK2. Residues 801–1031 form an interaction with KIF24 region; sequence NMLSLRHNSR…PVSTLQRTNP (231 aa). Disordered stretches follow at residues 863–894 and 910–999; these read LGHR…SDTP and NWGT…GFSH. Residues 921–936 show a composition bias toward polar residues; sequence SNINPRQTETSVNASR. The segment covering 949-967 has biased composition (low complexity); the sequence is LNSASQRSSSLPPSNRKSS. Residue S994 is modified to Phosphoserine. A coiled-coil region spans residues 1109-1174; it reads RTLAETERFF…GSVRMTLKKF (66 aa).

Interacts with CCP110, CEP97 and KIF24. TTBK2-mediated phosphorylation at Ser-781 and Ser-788, promotes its ubiquitination at Lys-784 leading to proteasomal degradation, loss of MPHOSPH9 facilitates the removal of the CP110-CEP97 complex from the mother centrioles, promoting the initiation of ciliogenesis. Phosphorylated in M (mitotic) phase. Post-translationally, ubiquitinated at Lys-784, leading to proteasomal degradation.

The protein resides in the cytoplasm. Its subcellular location is the cytoskeleton. It localises to the microtubule organizing center. The protein localises to the centrosome. It is found in the centriole. The protein resides in the golgi apparatus membrane. In terms of biological role, negatively regulates cilia formation by recruiting the CP110-CEP97 complex (a negative regulator of ciliogenesis) at the distal end of the mother centriole in ciliary cells. At the beginning of cilia formation, MPHOSPH9 undergoes TTBK2-mediated phosphorylation and degradation via the ubiquitin-proteasome system and removes itself and the CP110-CEP97 complex from the distal end of the mother centriole, which subsequently promotes cilia formation. The protein is M-phase phosphoprotein 9 (MPHOSPH9) of Homo sapiens (Human).